The primary structure comprises 591 residues: uncharacterized protein (591 aa).

The next 4 helical transmembrane spans lie at Val-389 to Ile-409, Gly-411 to Leu-431, Gly-538 to Ser-558, and Pro-571 to Leu-591.

The protein resides in the membrane. This is an uncharacterized protein from Mycoplasma (Bacteriophage L2).